Reading from the N-terminus, the 440-residue chain is Gamma-aminobutyric acid receptor subunit pi (440 aa).

The first 23 residues, 1–23 (MKRSLHLTFVCLSLFSARMCVQG), serve as a signal peptide directing secretion. Residues 24–241 (NQFNIEVSRS…LVLQFELQRN (218 aa)) lie on the Extracellular side of the membrane. 3 N-linked (GlcNAc...) asparagine glycosylation sites follow: Asn-43, Asn-102, and Asn-145. Residues Cys-160 and Cys-174 are joined by a disulfide bond. Residues Asn-196 and Asn-228 are each glycosylated (N-linked (GlcNAc...) asparagine). The chain crosses the membrane as a helical span at residues 242 to 262 (VLYFILETYVPSTFLVVLSWV). The Cytoplasmic portion of the chain corresponds to 263 to 270 (SFWISLDS). Residues 271-290 (VPARTCIGVTTVLSMTTLMI) form a helical membrane-spanning segment. Residues 291-301 (GSRTSLPNTNC) are Extracellular-facing. Residues 302-322 (FIKAIDVYLGICFSFVFGALL) traverse the membrane as a helical segment. Topologically, residues 323-419 (EYAVAHYSSL…NPSNVDRYSK (97 aa)) are cytoplasmic. Residues 420–440 (LLFPLIFMLANVFYWAYYMYF) traverse the membrane as a helical segment.

It belongs to the ligand-gated ion channel (TC 1.A.9) family. Gamma-aminobutyric acid receptor (TC 1.A.9.5) subfamily. GABRP sub-subfamily. As to quaternary structure, heteropentamer, formed by a combination of alpha (GABRA1-6), beta (GABRB1-3), gamma (GABRG1-3), delta (GABRD), epsilon (GABRE), rho (GABRR1-3), pi (GABRP) and theta (GABRQ) chains, each subunit exhibiting distinct physiological and pharmacological properties.

It is found in the cell membrane. Its subcellular location is the apical cell membrane. It carries out the reaction chloride(in) = chloride(out). Functionally, pi subunit of the heteropentameric ligand-gated chloride channel gated by gamma-aminobutyric acid (GABA). GABA-gated chloride channels, also named GABA(A) receptors (GABAAR), consist of five subunits arranged around a central pore and contain GABA active binding site(s) located at the alpha and beta subunit interfaces. When activated by GABA, GABAARs selectively allow the flow of chloride anions across the cell membrane down their electrochemical gradient. Pi-containing GABAARs are mostly located in peripheral tissues. In the uterus, pi subunits modulate uterus contraction by altering the sensitivity of GABAARs to pregnanolone. In the lungs, pi-containing GABAARs contribute to pulmonary fluid transport via luminal secretion of chloride. The polypeptide is Gamma-aminobutyric acid receptor subunit pi (GABRP) (Bos taurus (Bovine)).